The primary structure comprises 269 residues: Dihydropteroate synthase (269 aa).

Residues 14-261 (TYIMGILNFT…DVLENSRAAK (248 aa)) enclose the Pterin-binding domain. Asn-21 lines the Mg(2+) pocket. Residues Thr-61, Asp-95, Asn-114, Asp-178, Lys-214, and 249 to 251 (RVH) contribute to the (7,8-dihydropterin-6-yl)methyl diphosphate site.

It belongs to the DHPS family. Mg(2+) serves as cofactor.

The enzyme catalyses (7,8-dihydropterin-6-yl)methyl diphosphate + 4-aminobenzoate = 7,8-dihydropteroate + diphosphate. Its pathway is cofactor biosynthesis; tetrahydrofolate biosynthesis; 7,8-dihydrofolate from 2-amino-4-hydroxy-6-hydroxymethyl-7,8-dihydropteridine diphosphate and 4-aminobenzoate: step 1/2. Its function is as follows. Catalyzes the condensation of para-aminobenzoate (pABA) with 6-hydroxymethyl-7,8-dihydropterin diphosphate (DHPt-PP) to form 7,8-dihydropteroate (H2Pte), the immediate precursor of folate derivatives. This is Dihydropteroate synthase from Clostridium beijerinckii (strain ATCC 51743 / NCIMB 8052) (Clostridium acetobutylicum).